We begin with the raw amino-acid sequence, 201 residues long: MELVLKDAQSALEVSETTFGRDFNEALVHQVVVAYAANARQGTRAQKTRAEVTGSGKKPWRQKGTGRARAGGVKGPIWRGGGVTFAAKTQDHSQKVNKKMYRGALKSILSELVRQDRLVVVESFSVEAPKTKELKAKLKAMNLEDVLIVTSEVDENLFLAARNLYKVDVRDVAGLDPVSLIAFNTVLVTADAVKQIEEMLA.

The tract at residues 45 to 71 (AQKTRAEVTGSGKKPWRQKGTGRARAG) is disordered.

It belongs to the universal ribosomal protein uL4 family. Part of the 50S ribosomal subunit.

One of the primary rRNA binding proteins, this protein initially binds near the 5'-end of the 23S rRNA. It is important during the early stages of 50S assembly. It makes multiple contacts with different domains of the 23S rRNA in the assembled 50S subunit and ribosome. Functionally, forms part of the polypeptide exit tunnel. The polypeptide is Large ribosomal subunit protein uL4 (Shewanella oneidensis (strain ATCC 700550 / JCM 31522 / CIP 106686 / LMG 19005 / NCIMB 14063 / MR-1)).